The chain runs to 677 residues: Protein windpipe (677 aa).

The signal sequence occupies residues 1–20 (MERVHLTAWLALFLIVVANA). At 21–451 (TPTPARTPTG…IGKPKDDSSA (431 aa)) the chain is on the extracellular side. N-linked (GlcNAc...) asparagine glycans are attached at residues N53 and N80. LRR repeat units follow at residues 91-116 (LPEL…GLKR), 118-133 (NLKH…RKLP), 134-156 (QHLQ…LTHM), and 158-183 (QLHQ…NWLV). N-linked (GlcNAc...) asparagine glycans are attached at residues N145 and N170. The LRRCT domain occupies 184–216 (ERIVYMEHPVVCSYPLEFRGRSWLQLKQDEICK). Disordered regions lie at residues 264 to 285 (AKKV…SGDL), 298 to 317 (TVAE…ASPS), and 325 to 385 (KDED…TVFS). A compositionally biased stretch (basic and acidic residues) spans 347–372 (SKVKITSEDDIDSDGKPEESDVRPLE). Residues 374–385 (PENSENPDTVFS) are compositionally biased toward polar residues. A helical membrane pass occupies residues 452-472 (IYYLLAVIGLIVVGLVLFVAI). The Cytoplasmic portion of the chain corresponds to 473–677 (KRCKYDSNAA…EPTHQVINGH (205 aa)). 2 disordered regions span residues 502–523 (LGKP…LIGE) and 539–677 (NGEA…INGH). The segment covering 595–607 (AQQQQLAEQNNNE) has biased composition (low complexity).

In terms of assembly, interacts with dome; the interaction promotes internalization of dome and its subsequent lysosomal degradation. In terms of tissue distribution, in adult intestine, expressed in both small progenitor cells and large nuclei enterocytes (at protein level). During embryogenesis, restricted to the developing trachea.

It localises to the cell membrane. Plays a role in negative regulation of the JAK/STAT pathway by binding to the receptor dome and promoting its internalization for subsequent lysosomal degradation, thereby reducing JAK/STAT signaling. In Drosophila melanogaster (Fruit fly), this protein is Protein windpipe.